A 187-amino-acid chain; its full sequence is Flavin prenyltransferase UbiX (187 aa).

Residues 9–11, Thr-34, 88–91, and Arg-123 contribute to the FMN site; these read GSS and SISS. Residues Tyr-153 and Lys-169 each contribute to the dimethylallyl phosphate site.

The protein belongs to the UbiX/PAD1 family.

It catalyses the reaction dimethylallyl phosphate + FMNH2 = prenylated FMNH2 + phosphate. In terms of biological role, flavin prenyltransferase that catalyzes the synthesis of the prenylated FMN cofactor (prenyl-FMN) for 4-hydroxy-3-polyprenylbenzoic acid decarboxylase UbiD. The prenyltransferase is metal-independent and links a dimethylallyl moiety from dimethylallyl monophosphate (DMAP) to the flavin N5 and C6 atoms of FMN. The protein is Flavin prenyltransferase UbiX of Campylobacter jejuni subsp. jejuni serotype O:2 (strain ATCC 700819 / NCTC 11168).